An 85-amino-acid chain; its full sequence is Large ribosomal subunit protein bL27 (85 aa).

The segment at 1-20 (MAHKKAAGSSRNGRDSNPKM) is disordered.

It belongs to the bacterial ribosomal protein bL27 family.

The protein is Large ribosomal subunit protein bL27 of Psychrobacter arcticus (strain DSM 17307 / VKM B-2377 / 273-4).